The chain runs to 417 residues: Sulfate adenylyltransferase (417 aa).

This sequence belongs to the sulfate adenylyltransferase family.

It catalyses the reaction sulfate + ATP + H(+) = adenosine 5'-phosphosulfate + diphosphate. The protein operates within sulfur metabolism; hydrogen sulfide biosynthesis; sulfite from sulfate: step 1/3. The chain is Sulfate adenylyltransferase from Psychrobacter cryohalolentis (strain ATCC BAA-1226 / DSM 17306 / VKM B-2378 / K5).